A 739-amino-acid chain; its full sequence is DNA ligase (739 aa).

NAD(+)-binding positions include 34–38 (DADYD), 83–84 (SL), and Glu117. The active-site N6-AMP-lysine intermediate is Lys119. NAD(+) is bound by residues Arg140, Glu175, Lys291, and Lys315. Zn(2+) is bound by residues Cys420, Cys423, Cys438, and Cys444. Positions 660–739 (ADDSPVAGKT…DGWLDLIGQA (80 aa)) constitute a BRCT domain.

The protein belongs to the NAD-dependent DNA ligase family. LigA subfamily. Requires Mg(2+) as cofactor. Mn(2+) is required as a cofactor.

It catalyses the reaction NAD(+) + (deoxyribonucleotide)n-3'-hydroxyl + 5'-phospho-(deoxyribonucleotide)m = (deoxyribonucleotide)n+m + AMP + beta-nicotinamide D-nucleotide.. Functionally, DNA ligase that catalyzes the formation of phosphodiester linkages between 5'-phosphoryl and 3'-hydroxyl groups in double-stranded DNA using NAD as a coenzyme and as the energy source for the reaction. It is essential for DNA replication and repair of damaged DNA. This is DNA ligase from Ruegeria sp. (strain TM1040) (Silicibacter sp.).